The sequence spans 256 residues: Acetylglutamate kinase (256 aa).

Residues 40 to 41, Arg-62, and Asn-154 each bind substrate; that span reads GG.

Belongs to the acetylglutamate kinase family. ArgB subfamily.

It localises to the cytoplasm. The enzyme catalyses N-acetyl-L-glutamate + ATP = N-acetyl-L-glutamyl 5-phosphate + ADP. It participates in amino-acid biosynthesis; L-arginine biosynthesis; N(2)-acetyl-L-ornithine from L-glutamate: step 2/4. In terms of biological role, catalyzes the ATP-dependent phosphorylation of N-acetyl-L-glutamate. The protein is Acetylglutamate kinase of Staphylococcus aureus (strain bovine RF122 / ET3-1).